We begin with the raw amino-acid sequence, 521 residues long: Probable protein kinase UbiB (521 aa).

Residues 119 to 497 form the Protein kinase domain; sequence QFDETPIASA…QKRTNRLLQT (379 aa). ATP contacts are provided by residues 125 to 133 and K151; that span reads IASASIAQV. The Proton acceptor role is filled by D286. The helical transmembrane segment at 496-516 threads the bilayer; the sequence is QTIIYGGIGFVLGLLAMQLLV.

Belongs to the ABC1 family. UbiB subfamily.

It is found in the cell inner membrane. The protein operates within cofactor biosynthesis; ubiquinone biosynthesis [regulation]. Functionally, is probably a protein kinase regulator of UbiI activity which is involved in aerobic coenzyme Q (ubiquinone) biosynthesis. The protein is Probable protein kinase UbiB of Variovorax paradoxus (strain S110).